Here is an 865-residue protein sequence, read N- to C-terminus: Alanine--tRNA ligase (865 aa).

Zn(2+)-binding residues include His-554, His-558, Cys-656, and His-660.

It belongs to the class-II aminoacyl-tRNA synthetase family. Requires Zn(2+) as cofactor.

Its subcellular location is the cytoplasm. The enzyme catalyses tRNA(Ala) + L-alanine + ATP = L-alanyl-tRNA(Ala) + AMP + diphosphate. Its function is as follows. Catalyzes the attachment of alanine to tRNA(Ala) in a two-step reaction: alanine is first activated by ATP to form Ala-AMP and then transferred to the acceptor end of tRNA(Ala). Also edits incorrectly charged Ser-tRNA(Ala) and Gly-tRNA(Ala) via its editing domain. In Francisella tularensis subsp. holarctica (strain LVS), this protein is Alanine--tRNA ligase.